The chain runs to 85 residues: Small ribosomal subunit protein uS17 (85 aa).

Belongs to the universal ribosomal protein uS17 family. In terms of assembly, part of the 30S ribosomal subunit.

Its function is as follows. One of the primary rRNA binding proteins, it binds specifically to the 5'-end of 16S ribosomal RNA. The protein is Small ribosomal subunit protein uS17 of Geobacter sulfurreducens (strain ATCC 51573 / DSM 12127 / PCA).